The sequence spans 698 residues: Adhesion G protein-coupled receptor F4 (698 aa).

The N-terminal stretch at M1 to C19 is a signal peptide. Topologically, residues S20–T409 are extracellular. N-linked (GlcNAc...) asparagine glycans are attached at residues N61, N168, N213, N268, N290, N344, and N375. In terms of domain architecture, GAIN-B spans R250–K401. 2 disulfide bridges follow: C353/C380 and C368/C382. The segment at C353–K401 is GPS. The chain crosses the membrane as a helical span at residues F410–V430. Topologically, residues W431–H444 are cytoplasmic. The chain crosses the membrane as a helical span at residues V445–S465. N466 carries an N-linked (GlcNAc...) asparagine glycan. At N466–H486 the chain is on the extracellular side. Residues F487–I507 traverse the membrane as a helical segment. Residues L508 to R518 are Cytoplasmic-facing. Residues M519–V539 traverse the membrane as a helical segment. Over T540–A566 the chain is Extracellular. The N-linked (GlcNAc...) asparagine glycan is linked to N559. The chain crosses the membrane as a helical span at residues F567–I587. At N588–N611 the chain is on the cytoplasmic side. The helical transmembrane segment at V612–E632 threads the bilayer. Over G633 to H635 the chain is Extracellular. Residues L636 to F656 traverse the membrane as a helical segment. Topologically, residues G657 to R698 are cytoplasmic.

The protein belongs to the G-protein coupled receptor 2 family. Adhesion G-protein coupled receptor (ADGR) subfamily. Expressed in squamous epithelia.

The protein resides in the membrane. In terms of biological role, orphan receptor. This chain is Adhesion G protein-coupled receptor F4 (Adgrf4), found in Mus musculus (Mouse).